A 474-amino-acid polypeptide reads, in one-letter code: Bifunctional protein HldE (474 aa).

The segment at 1 to 318 (MKLSMPRFDQ…RAIQREEGSE (318 aa)) is ribokinase. Position 194–197 (194–197 (NLSE)) interacts with ATP. Asp-263 is an active-site residue. The cytidylyltransferase stretch occupies residues 343-474 (FTNGCFDILH…AIVEKIRGQG (132 aa)).

In the N-terminal section; belongs to the carbohydrate kinase PfkB family. The protein in the C-terminal section; belongs to the cytidylyltransferase family. As to quaternary structure, homodimer.

The catalysed reaction is D-glycero-beta-D-manno-heptose 7-phosphate + ATP = D-glycero-beta-D-manno-heptose 1,7-bisphosphate + ADP + H(+). It carries out the reaction D-glycero-beta-D-manno-heptose 1-phosphate + ATP + H(+) = ADP-D-glycero-beta-D-manno-heptose + diphosphate. It functions in the pathway nucleotide-sugar biosynthesis; ADP-L-glycero-beta-D-manno-heptose biosynthesis; ADP-L-glycero-beta-D-manno-heptose from D-glycero-beta-D-manno-heptose 7-phosphate: step 1/4. It participates in nucleotide-sugar biosynthesis; ADP-L-glycero-beta-D-manno-heptose biosynthesis; ADP-L-glycero-beta-D-manno-heptose from D-glycero-beta-D-manno-heptose 7-phosphate: step 3/4. Functionally, catalyzes the phosphorylation of D-glycero-D-manno-heptose 7-phosphate at the C-1 position to selectively form D-glycero-beta-D-manno-heptose-1,7-bisphosphate. Its function is as follows. Catalyzes the ADP transfer from ATP to D-glycero-beta-D-manno-heptose 1-phosphate, yielding ADP-D-glycero-beta-D-manno-heptose. In Pseudomonas savastanoi pv. phaseolicola (strain 1448A / Race 6) (Pseudomonas syringae pv. phaseolicola (strain 1448A / Race 6)), this protein is Bifunctional protein HldE.